A 373-amino-acid polypeptide reads, in one-letter code: UPF0725 protein At1g23950 (373 aa).

Threonine 2 carries the post-translational modification N-acetylthreonine.

The protein belongs to the UPF0725 (EMB2204) family.

The sequence is that of UPF0725 protein At1g23950 from Arabidopsis thaliana (Mouse-ear cress).